A 392-amino-acid chain; its full sequence is Leucine-rich repeat-containing protein 74B (392 aa).

Residues 24-46 (RLSGVPEAEQGPEANWDSDLETE) form a disordered region. LRR repeat units lie at residues 106–129 (NPYV…ALAG), 134–157 (SSSI…ALCA), 162–185 (NQAM…HLAE), 192–213 (DLKS…TLGP), 220–241 (GLTE…AFAR), 248–269 (FLKV…AVGE), 276–297 (VLEE…SLGL), 304–325 (TLRI…GLLK), and 334–356 (ALEL…ASSV).

This chain is Leucine-rich repeat-containing protein 74B, found in Homo sapiens (Human).